The following is a 133-amino-acid chain: Nickel-responsive regulator (133 aa).

Positions 76, 87, 89, and 95 each coordinate Ni(2+).

Belongs to the transcriptional regulatory CopG/NikR family. In terms of assembly, homotetramer. The cofactor is Ni(2+).

Its function is as follows. Transcriptional repressor of the nikABCDE operon. Is active in the presence of excessive concentrations of intracellular nickel. The polypeptide is Nickel-responsive regulator (Escherichia fergusonii (strain ATCC 35469 / DSM 13698 / CCUG 18766 / IAM 14443 / JCM 21226 / LMG 7866 / NBRC 102419 / NCTC 12128 / CDC 0568-73)).